We begin with the raw amino-acid sequence, 718 residues long: DNA ligase (718 aa).

Residues 44–48 (DADYD), 93–94 (SL), and Glu-127 each bind NAD(+). Lys-129 (N6-AMP-lysine intermediate) is an active-site residue. Positions 150, 186, 302, and 326 each coordinate NAD(+). Cys-432, Cys-435, Cys-456, and Cys-462 together coordinate Zn(2+). Positions 640 to 718 (TAGSPVAGKT…EDEWLALISG (79 aa)) constitute a BRCT domain.

It belongs to the NAD-dependent DNA ligase family. LigA subfamily. Mg(2+) is required as a cofactor. Mn(2+) serves as cofactor.

It catalyses the reaction NAD(+) + (deoxyribonucleotide)n-3'-hydroxyl + 5'-phospho-(deoxyribonucleotide)m = (deoxyribonucleotide)n+m + AMP + beta-nicotinamide D-nucleotide.. In terms of biological role, DNA ligase that catalyzes the formation of phosphodiester linkages between 5'-phosphoryl and 3'-hydroxyl groups in double-stranded DNA using NAD as a coenzyme and as the energy source for the reaction. It is essential for DNA replication and repair of damaged DNA. This is DNA ligase from Rhizobium etli (strain ATCC 51251 / DSM 11541 / JCM 21823 / NBRC 15573 / CFN 42).